A 438-amino-acid polypeptide reads, in one-letter code: UDP-N-acetylmuramoylalanine--D-glutamate ligase (438 aa).

Position 112–118 (112–118 (GSNGKST)) interacts with ATP.

This sequence belongs to the MurCDEF family.

The protein resides in the cytoplasm. It catalyses the reaction UDP-N-acetyl-alpha-D-muramoyl-L-alanine + D-glutamate + ATP = UDP-N-acetyl-alpha-D-muramoyl-L-alanyl-D-glutamate + ADP + phosphate + H(+). It functions in the pathway cell wall biogenesis; peptidoglycan biosynthesis. Cell wall formation. Catalyzes the addition of glutamate to the nucleotide precursor UDP-N-acetylmuramoyl-L-alanine (UMA). This is UDP-N-acetylmuramoylalanine--D-glutamate ligase from Shigella dysenteriae serotype 1 (strain Sd197).